Reading from the N-terminus, the 239-residue chain is Hexuronic acid methyltransferase AglP (239 aa).

The protein belongs to the FkbM methyltransferase family.

It localises to the cytoplasm. The protein operates within cell surface structure biogenesis; S-layer biogenesis. Functionally, involved in the assembly of a N-linked pentasaccharide that decorates the S-layer glycoprotein and flagellins. S-adenosyl-L-methionine-dependent methyltransferase that modifies the hexuronic acid found at position 4 of the pentasaccharide. This Haloferax volcanii (strain ATCC 29605 / DSM 3757 / JCM 8879 / NBRC 14742 / NCIMB 2012 / VKM B-1768 / DS2) (Halobacterium volcanii) protein is Hexuronic acid methyltransferase AglP (aglP).